We begin with the raw amino-acid sequence, 421 residues long: Serine--tRNA ligase (421 aa).

Position 225–227 (225–227 (TAE)) interacts with L-serine. Residues 256-258 (RSE) and Val272 contribute to the ATP site. Glu279 contributes to the L-serine binding site. An ATP-binding site is contributed by 345-348 (ETHS). An L-serine-binding site is contributed by Thr380.

Belongs to the class-II aminoacyl-tRNA synthetase family. Type-1 seryl-tRNA synthetase subfamily. In terms of assembly, homodimer. The tRNA molecule binds across the dimer.

The protein localises to the cytoplasm. It carries out the reaction tRNA(Ser) + L-serine + ATP = L-seryl-tRNA(Ser) + AMP + diphosphate + H(+). The enzyme catalyses tRNA(Sec) + L-serine + ATP = L-seryl-tRNA(Sec) + AMP + diphosphate + H(+). The protein operates within aminoacyl-tRNA biosynthesis; selenocysteinyl-tRNA(Sec) biosynthesis; L-seryl-tRNA(Sec) from L-serine and tRNA(Sec): step 1/1. Functionally, catalyzes the attachment of serine to tRNA(Ser). Is also able to aminoacylate tRNA(Sec) with serine, to form the misacylated tRNA L-seryl-tRNA(Sec), which will be further converted into selenocysteinyl-tRNA(Sec). The sequence is that of Serine--tRNA ligase from Thermus thermophilus (strain ATCC 27634 / DSM 579 / HB8).